The sequence spans 760 residues: Phosphatidylinositol N-acetylglucosaminyltransferase subunit Q (760 aa).

The next 5 helical transmembrane spans lie at 278-298 (TVAS…WLHG), 349-371 (LYHI…HILW), 378-400 (CLGL…FHIY), 446-468 (LFIG…LYYL), and 475-497 (LLVV…LPLY). Residues 696-748 (LAVGVEGPCQDEPPSPRHPLAPSAEQHPASGGLKQSLTPVPSGPGPSLPEPHG) are disordered.

Belongs to the PIGQ family. Component of the glycosylphosphatidylinositol-N-acetylglucosaminyltransferase (GPI-GnT) complex composed at least by PIGA, PIGC, PIGH, PIGP, PIGQ, PIGY and DPM2. Interacts with PIGA, PIGH and PIGC.

The protein localises to the membrane. The protein operates within glycolipid biosynthesis; glycosylphosphatidylinositol-anchor biosynthesis. Functionally, part of the glycosylphosphatidylinositol-N-acetylglucosaminyltransferase (GPI-GnT) complex that catalyzes the transfer of N-acetylglucosamine from UDP-N-acetylglucosamine to phosphatidylinositol and participates in the first step of GPI biosynthesis. The chain is Phosphatidylinositol N-acetylglucosaminyltransferase subunit Q from Homo sapiens (Human).